The following is a 399-amino-acid chain: Dihydrolipoyllysine-residue succinyltransferase component of 2-oxoglutarate dehydrogenase complex (399 aa).

One can recognise a Lipoyl-binding domain in the interval 2–77; that stretch reads AIDIKAPTFP…LSGELLGKLT (76 aa). Lysine 43 carries the post-translational modification N6-lipoyllysine. Residues 104–141 enclose the Peripheral subunit-binding (PSBD) domain; that stretch reads ILSPAARKIAEENAIAADSITGTGKGGRVTKEDAVAAA. Catalysis depends on residues histidine 370 and aspartate 374.

The protein belongs to the 2-oxoacid dehydrogenase family. In terms of assembly, forms a 24-polypeptide structural core with octahedral symmetry. Part of the 2-oxoglutarate dehydrogenase (OGDH) complex composed of E1 (2-oxoglutarate dehydrogenase), E2 (dihydrolipoamide succinyltransferase) and E3 (dihydrolipoamide dehydrogenase); the complex contains multiple copies of the three enzymatic components (E1, E2 and E3). The cofactor is (R)-lipoate.

It carries out the reaction N(6)-[(R)-dihydrolipoyl]-L-lysyl-[protein] + succinyl-CoA = N(6)-[(R)-S(8)-succinyldihydrolipoyl]-L-lysyl-[protein] + CoA. It functions in the pathway amino-acid degradation; L-lysine degradation via saccharopine pathway; glutaryl-CoA from L-lysine: step 6/6. In terms of biological role, E2 component of the 2-oxoglutarate dehydrogenase (OGDH) complex which catalyzes the second step in the conversion of 2-oxoglutarate to succinyl-CoA and CO(2). This is Dihydrolipoyllysine-residue succinyltransferase component of 2-oxoglutarate dehydrogenase complex (sucB) from Azotobacter vinelandii.